The primary structure comprises 118 residues: Small ribosomal subunit protein uS13 (118 aa).

A disordered region spans residues 94–118 (GLPVRGQRTKTNARTRKGPRKPIKK).

Belongs to the universal ribosomal protein uS13 family. In terms of assembly, part of the 30S ribosomal subunit. Forms a loose heterodimer with protein S19. Forms two bridges to the 50S subunit in the 70S ribosome.

Located at the top of the head of the 30S subunit, it contacts several helices of the 16S rRNA. In the 70S ribosome it contacts the 23S rRNA (bridge B1a) and protein L5 of the 50S subunit (bridge B1b), connecting the 2 subunits; these bridges are implicated in subunit movement. Contacts the tRNAs in the A and P-sites. The sequence is that of Small ribosomal subunit protein uS13 from Histophilus somni (strain 129Pt) (Haemophilus somnus).